The following is a 231-amino-acid chain: 7-cyano-7-deazaguanine synthase (231 aa).

8-18 is an ATP binding site; it reads LSGGLDSATAA. Cys189, Cys197, Cys200, and Cys203 together coordinate Zn(2+).

The protein belongs to the QueC family. Zn(2+) serves as cofactor.

The enzyme catalyses 7-carboxy-7-deazaguanine + NH4(+) + ATP = 7-cyano-7-deazaguanine + ADP + phosphate + H2O + H(+). The protein operates within purine metabolism; 7-cyano-7-deazaguanine biosynthesis. Catalyzes the ATP-dependent conversion of 7-carboxy-7-deazaguanine (CDG) to 7-cyano-7-deazaguanine (preQ(0)). This is 7-cyano-7-deazaguanine synthase from Synechococcus elongatus (strain ATCC 33912 / PCC 7942 / FACHB-805) (Anacystis nidulans R2).